The chain runs to 170 residues: Phosphopantetheine adenylyltransferase (170 aa).

Threonine 17 lines the substrate pocket. Residues threonine 17 to phenylalanine 18 and histidine 25 contribute to the ATP site. The substrate site is built by lysine 49, leucine 81, and arginine 95. ATP is bound by residues glycine 96–arginine 98, glutamate 106, and leucine 131–threonine 137.

It belongs to the bacterial CoaD family. In terms of assembly, homohexamer. The cofactor is Mg(2+).

Its subcellular location is the cytoplasm. The enzyme catalyses (R)-4'-phosphopantetheine + ATP + H(+) = 3'-dephospho-CoA + diphosphate. The protein operates within cofactor biosynthesis; coenzyme A biosynthesis; CoA from (R)-pantothenate: step 4/5. In terms of biological role, reversibly transfers an adenylyl group from ATP to 4'-phosphopantetheine, yielding dephospho-CoA (dPCoA) and pyrophosphate. The chain is Phosphopantetheine adenylyltransferase from Legionella pneumophila subsp. pneumophila (strain Philadelphia 1 / ATCC 33152 / DSM 7513).